Reading from the N-terminus, the 136-residue chain is Small ribosomal subunit protein uS9 (136 aa).

The protein belongs to the universal ribosomal protein uS9 family.

The polypeptide is Small ribosomal subunit protein uS9 (Borreliella burgdorferi (strain ZS7) (Borrelia burgdorferi)).